A 149-amino-acid chain; its full sequence is Endonuclease I (149 aa).

Homodimer.

The enzyme catalyses Endonucleolytic cleavage to 5'-phosphooligonucleotide end-products.. Its function is as follows. Junction-resolving enzyme that selectively binds and cleaves four-way (Holliday) DNA junctions present after viral genomic replication. These intermediates are created during DNA repair, processing of stalled replication forks and homologous genetic recombination. Introduces two nicks on the two non-crossing strands, at 5' sides of the junction. Also participates together with gp6 in the degradation of host chromosome to provide nucleotides for phage DNA synthesis. The protein is Endonuclease I of Escherichia coli (Bacteriophage T7).